We begin with the raw amino-acid sequence, 90 residues long: Cell division topological specificity factor (90 aa).

This sequence belongs to the MinE family.

Prevents the cell division inhibition by proteins MinC and MinD at internal division sites while permitting inhibition at polar sites. This ensures cell division at the proper site by restricting the formation of a division septum at the midpoint of the long axis of the cell. The sequence is that of Cell division topological specificity factor from Clostridium perfringens (strain ATCC 13124 / DSM 756 / JCM 1290 / NCIMB 6125 / NCTC 8237 / Type A).